Consider the following 692-residue polypeptide: DNA ligase (692 aa).

Residues 35 to 39 (DLVYD), 88 to 89 (SL), and Glu-117 contribute to the NAD(+) site. The active-site N6-AMP-lysine intermediate is Lys-119. Arg-140, Glu-176, Lys-301, and Lys-325 together coordinate NAD(+). Positions 416, 419, 434, and 439 each coordinate Zn(2+). The BRCT domain occupies 611–692 (LTNQSNSWAS…FDLIKNSKKT (82 aa)).

The protein belongs to the NAD-dependent DNA ligase family. LigA subfamily. Requires Mg(2+) as cofactor. Mn(2+) serves as cofactor.

It catalyses the reaction NAD(+) + (deoxyribonucleotide)n-3'-hydroxyl + 5'-phospho-(deoxyribonucleotide)m = (deoxyribonucleotide)n+m + AMP + beta-nicotinamide D-nucleotide.. Functionally, DNA ligase that catalyzes the formation of phosphodiester linkages between 5'-phosphoryl and 3'-hydroxyl groups in double-stranded DNA using NAD as a coenzyme and as the energy source for the reaction. It is essential for DNA replication and repair of damaged DNA. The protein is DNA ligase of Mesomycoplasma hyopneumoniae (strain 7448) (Mycoplasma hyopneumoniae).